Consider the following 137-residue polypeptide: Large ribosomal subunit protein uL16 (137 aa).

The protein belongs to the universal ribosomal protein uL16 family. In terms of assembly, part of the 50S ribosomal subunit.

Functionally, binds 23S rRNA and is also seen to make contacts with the A and possibly P site tRNAs. The sequence is that of Large ribosomal subunit protein uL16 from Halorhodospira halophila (strain DSM 244 / SL1) (Ectothiorhodospira halophila (strain DSM 244 / SL1)).